The following is a 509-amino-acid chain: 4-aminobutyrate aminotransferase (509 aa).

166 to 167 is a pyridoxal 5'-phosphate binding site; it reads GS. Arginine 223 contributes to the substrate binding site. Lysine 363 is modified (N6-(pyridoxal phosphate)lysine). Threonine 387 serves as a coordination point for pyridoxal 5'-phosphate.

It belongs to the class-III pyridoxal-phosphate-dependent aminotransferase family. Homodimer. The cofactor is pyridoxal 5'-phosphate.

Its subcellular location is the cytoplasm. The enzyme catalyses 4-aminobutanoate + 2-oxoglutarate = succinate semialdehyde + L-glutamate. Functionally, deaminates gamma-aminobutyric acid (GABA) to succinate-semialdehyde, which in turn is converted to succinate by the succinate semialdehyde dehydrogenase. Not required for the utilization of GABA as nitrogen source. The protein is 4-aminobutyrate aminotransferase (GATA) of Mycosarcoma maydis (Corn smut fungus).